We begin with the raw amino-acid sequence, 389 residues long: Chalcone synthase H2 (389 aa).

Residue Cys-164 is part of the active site.

The protein belongs to the thiolase-like superfamily. Chalcone/stilbene synthases family.

It localises to the cytoplasm. The enzyme catalyses (E)-4-coumaroyl-CoA + 3 malonyl-CoA + 3 H(+) = 2',4,4',6'-tetrahydroxychalcone + 3 CO2 + 4 CoA. The protein operates within secondary metabolite biosynthesis; flavonoid biosynthesis. Functionally, involved in the biosynthesis of prenylated phenolics natural products which contribute to the bitter taste of beer and display broad biological activities. Chalcone synthase that can use 4-coumaroyl-CoA to produce 4,2',4',6'-tetrahydroxychalcone (also termed naringenin-chalcone or chalcone) which can, under specific conditions, spontaneously isomerize into naringenin. The polypeptide is Chalcone synthase H2 (Humulus lupulus (European hop)).